The following is a 62-amino-acid chain: Large ribosomal subunit protein eL37 (62 aa).

Residues C20, C23, C35, and C38 each contribute to the Zn(2+) site. The segment at 20 to 38 (CRRCGRRSYNVAKGYCAAC) adopts a C4-type zinc-finger fold.

The protein belongs to the eukaryotic ribosomal protein eL37 family. Zn(2+) serves as cofactor.

In terms of biological role, binds to the 23S rRNA. This is Large ribosomal subunit protein eL37 (rpl37e) from Aeropyrum pernix (strain ATCC 700893 / DSM 11879 / JCM 9820 / NBRC 100138 / K1).